We begin with the raw amino-acid sequence, 291 residues long: MPELPEVEVVRRGLERGVVGRTVAEVEVHHLRAVRRHLAGADHFAASLVGQTVATARRRGKYLWLGLTPSEPGGPAVGDALLGHLGMSGQLLVVPADSPDQVHLRVRFRFTDEGRELRFVDQRTFGGLAVVSGGAELPAPIAHIAPDPLSVDFDPERFADALRRRRTGLKRALLDQTLISGVGNIYADEGLWAARLHYARPTETVTRAEALRLLDAVRTVMTAALAAGGTSFDRLYVSTEGVSGLFERSLEVYGRGGQACSRCASTIRRDAFMNRSSFSCPACQPRPRRVR.

Proline 2 (schiff-base intermediate with DNA) is an active-site residue. Residue glutamate 3 is the Proton donor of the active site. Residue lysine 61 is the Proton donor; for beta-elimination activity of the active site. The DNA site is built by histidine 103, arginine 123, and arginine 165. The segment at glutamate 251–proline 285 adopts an FPG-type zinc-finger fold. The Proton donor; for delta-elimination activity role is filled by arginine 275.

The protein belongs to the FPG family. Monomer. Zn(2+) serves as cofactor.

The enzyme catalyses Hydrolysis of DNA containing ring-opened 7-methylguanine residues, releasing 2,6-diamino-4-hydroxy-5-(N-methyl)formamidopyrimidine.. It catalyses the reaction 2'-deoxyribonucleotide-(2'-deoxyribose 5'-phosphate)-2'-deoxyribonucleotide-DNA = a 3'-end 2'-deoxyribonucleotide-(2,3-dehydro-2,3-deoxyribose 5'-phosphate)-DNA + a 5'-end 5'-phospho-2'-deoxyribonucleoside-DNA + H(+). Involved in base excision repair of DNA damaged by oxidation or by mutagenic agents. Acts as a DNA glycosylase that recognizes and removes damaged bases. Has a preference for oxidized purines, such as 7,8-dihydro-8-oxoguanine (8-oxoG). Has AP (apurinic/apyrimidinic) lyase activity and introduces nicks in the DNA strand. Cleaves the DNA backbone by beta-delta elimination to generate a single-strand break at the site of the removed base with both 3'- and 5'-phosphates. The polypeptide is Formamidopyrimidine-DNA glycosylase (Parafrankia sp. (strain EAN1pec)).